Here is a 232-residue protein sequence, read N- to C-terminus: MNPNKIIDLKIITVGNYGVGKSSILKRFHQVDLDDNTTGFKTKKFIIDNHHVSVQTWDTSGQERFCSLSSSFYRNCDGVILCFSVDNEDSFKALDLWRDELIKFGYFPDRVPFILVGNKFDLEFKKHVINSKMAQDWCKYQKLKYQVGVNKELPDIIYHETSIEKLVSIDEAFINICRQAFENKIKISLSKLNNNNNNNEENNNNNNNNENNNYNNVPIFQIGQKIRSCCYY.

Residue 15–22 (GNYGVGKS) coordinates GTP. An Effector region motif is present at residues 35 to 40 (DNTTGF). GTP is bound by residues 58 to 62 (DTSGQ) and 118 to 121 (NKFD). Residues cysteine 229 and cysteine 230 are each lipidated (S-geranylgeranyl cysteine).

Belongs to the small GTPase superfamily. Rab family.

It localises to the cell membrane. The polypeptide is Ras-related protein RabP (rabP) (Dictyostelium discoideum (Social amoeba)).